The primary structure comprises 400 residues: Enoyl-[acyl-carrier-protein] reductase [NADH] 1 (400 aa).

NAD(+)-binding positions include 48–53 (GASSGY), 74–75 (FE), 111–112 (DA), and 139–140 (LA). Y225 contacts substrate. Y235 (proton donor) is an active-site residue. NAD(+) contacts are provided by residues K244 and 273 to 275 (VVT).

It belongs to the TER reductase family. In terms of assembly, monomer.

It catalyses the reaction a 2,3-saturated acyl-[ACP] + NAD(+) = a (2E)-enoyl-[ACP] + NADH + H(+). It participates in lipid metabolism; fatty acid biosynthesis. In terms of biological role, involved in the final reduction of the elongation cycle of fatty acid synthesis (FAS II). Catalyzes the reduction of a carbon-carbon double bond in an enoyl moiety that is covalently linked to an acyl carrier protein (ACP). The polypeptide is Enoyl-[acyl-carrier-protein] reductase [NADH] 1 (Vibrio vulnificus (strain YJ016)).